The following is a 3902-amino-acid chain: Hybrid PKS-NRPS synthetase pynA (3902 aa).

Residues 1-25 are disordered; sequence MDTPLSSSEISPRFSNTVPSSVSSM. One can recognise a Ketosynthase family 3 (KS3) domain in the interval 29–441; it reads ADPSVIVGLA…GTNAHVILDA (413 aa). Catalysis depends on for beta-ketoacyl synthase activity residues cysteine 201, histidine 324, and histidine 362. Positions 555–868 are malonyl-CoA:ACP transacylase (MAT) domain; that stretch reads VFTGQGAQWF…PYLASLTRGV (314 aa). The For malonyltransferase activity role is filled by serine 647. The segment at 945–1080 is N-terminal hotdog fold; it reads HSILGARMPG…GLVSVETNAL (136 aa). The tract at residues 945 to 1256 is dehydratase (DH) domain; sequence HSILGARMPG…LEVTALGSDK (312 aa). One can recognise a PKS/mFAS DH domain in the interval 945–1258; that stretch reads HSILGARMPG…VTALGSDKTD (314 aa). Residue histidine 977 is the Proton acceptor; for dehydratase activity of the active site. Residues 1100-1258 form a C-terminal hotdog fold region; that stretch reads QESIPAETLY…VTALGSDKTD (159 aa). Residue aspartate 1164 is the Proton donor; for dehydratase activity of the active site. Residues 1629 to 1945 are enoyl reductase (ER) domain; sequence GLLETLVFED…MGKHTGKVVL (317 aa). A ketoreductase (KR) domain region spans residues 1971–2143; sequence TYLLVGGLGG…AGTTMNCGMI (173 aa). In terms of domain architecture, Carrier 1 spans 2251-2328; it reads ERTTLVLSAF…ALVTKASGLI (78 aa). Position 2288 is an O-(pantetheine 4'-phosphoryl)serine (serine 2288). Over residues 2337–2350 the composition is skewed to basic and acidic residues; that stretch reads KAENVDNEGAKGNE. Positions 2337-2364 are disordered; the sequence is KAENVDNEGAKGNEDQEVETQQGQLNQP. The condensation (C) domain 7 stretch occupies residues 2374–2816; sequence VPMSSFQQRL…AEVNLCGALE (443 aa). The tract at residues 2836 to 3248 is adenylation (A) domain 8; that stretch reads SVGVCQRIME…NGLLTFKGRI (413 aa). In terms of domain architecture, Carrier 2 spans 3391 to 3467; the sequence is GDDAEILQGV…AIAGMIQKQL (77 aa). Position 3427 is an O-(pantetheine 4'-phosphoryl)serine (serine 3427). Residues 3515–3774 form a thioesterase (TE) domain region; it reads LTGIDTFIGL…VDFLPVDALT (260 aa).

The protein in the C-terminal section; belongs to the NRP synthetase family.

It functions in the pathway secondary metabolite biosynthesis. Its function is as follows. Hybrid PKS-NRPS synthetase; part of the gene cluster that mediates the biosynthesis of pyranonigrins, a family of antioxidative compounds. The first step of pyranonigrins biosynthesis is performed by the hybrid PKS-NRPS synthetase that condenses 6 malonyl-CoA units to an acetyl starter unit, to form a 1,3,5-trioxotetradecane-6,8-dienyl-ACP. The enoyl reductase (ER) domain of pynA is likely to be functional during the first two rounds of polyketide chain extension, to generate the saturated C-C bonds of the alkyl side chain. PynA subsequently forms the amide bond between the acyl chain and L-serine. Although pynA has a terminal reductase domain, it appears to require the thioesterase pynI for the release of the straight-chain intermediate from pynA via the formation of a tetramic acid pyranonigrin J. The methyltransferase pynC then coverts pyranonigrin J to pyranonigrin I via N-methylation. The FAD-dependent monooxygenase pynG catalyzes an epoxidation-mediated cyclization to form the dihydro-gamma-pyrone moiety, followed by pynD-catalyzed oxidation of the alcohol to the ketone and enolization to yield the characteristic tetramic acid-fused gamma-pyrone core of pyranonigrin H. Pyranonigrin H is substrate of pynH for dehydration-mediated exo-methylene formation from the serine side chain to produce pyranonigrin E, before the oxidase pynE reduces the exo-methylene of pyranonigrin E into a pendant methyl to form pyranonigrin G. The FAD-linked oxidoreductase pynB performs the reverse reaction and converts pyranonigrin G back to pyranonigrin E. The polypeptide is Hybrid PKS-NRPS synthetase pynA (Aspergillus niger (strain ATCC MYA-4892 / CBS 513.88 / FGSC A1513)).